A 265-amino-acid polypeptide reads, in one-letter code: 2-C-methyl-D-erythritol 4-phosphate cytidylyltransferase (265 aa).

The span at 231–241 shows a compositional bias: basic and acidic residues; sequence DRGGASREAER. The interval 231 to 265 is disordered; it reads DRGGASREAERSAMPSAATSVFSGARSAASGSEEV. Residues 253–265 are compositionally biased toward low complexity; the sequence is SGARSAASGSEEV.

Belongs to the IspD/TarI cytidylyltransferase family. IspD subfamily.

It catalyses the reaction 2-C-methyl-D-erythritol 4-phosphate + CTP + H(+) = 4-CDP-2-C-methyl-D-erythritol + diphosphate. It functions in the pathway isoprenoid biosynthesis; isopentenyl diphosphate biosynthesis via DXP pathway; isopentenyl diphosphate from 1-deoxy-D-xylulose 5-phosphate: step 2/6. In terms of biological role, catalyzes the formation of 4-diphosphocytidyl-2-C-methyl-D-erythritol from CTP and 2-C-methyl-D-erythritol 4-phosphate (MEP). The sequence is that of 2-C-methyl-D-erythritol 4-phosphate cytidylyltransferase from Xanthomonas campestris pv. campestris (strain B100).